The sequence spans 259 residues: Thiazole synthase (259 aa).

Residue Lys98 is the Schiff-base intermediate with DXP of the active site. Residues Gly159, 185–186 (AG), and 207–208 (NS) each bind 1-deoxy-D-xylulose 5-phosphate.

This sequence belongs to the ThiG family. Homotetramer. Forms heterodimers with either ThiH or ThiS.

The protein resides in the cytoplasm. The enzyme catalyses [ThiS sulfur-carrier protein]-C-terminal-Gly-aminoethanethioate + 2-iminoacetate + 1-deoxy-D-xylulose 5-phosphate = [ThiS sulfur-carrier protein]-C-terminal Gly-Gly + 2-[(2R,5Z)-2-carboxy-4-methylthiazol-5(2H)-ylidene]ethyl phosphate + 2 H2O + H(+). Its pathway is cofactor biosynthesis; thiamine diphosphate biosynthesis. Its function is as follows. Catalyzes the rearrangement of 1-deoxy-D-xylulose 5-phosphate (DXP) to produce the thiazole phosphate moiety of thiamine. Sulfur is provided by the thiocarboxylate moiety of the carrier protein ThiS. In vitro, sulfur can be provided by H(2)S. This chain is Thiazole synthase, found in Chlorobaculum tepidum (strain ATCC 49652 / DSM 12025 / NBRC 103806 / TLS) (Chlorobium tepidum).